The primary structure comprises 657 residues: Glycogen debranching enzyme (657 aa).

Asp-336 functions as the Nucleophile in the catalytic mechanism. The active-site Proton donor is the Glu-371. Residues 458–467 show a composition bias toward basic and acidic residues; sequence NEANGEENRD. The segment at 458–479 is disordered; sequence NEANGEENRDGTNNNYSNNHGK.

Belongs to the glycosyl hydrolase 13 family.

The enzyme catalyses Hydrolysis of (1-&gt;6)-alpha-D-glucosidic linkages to branches with degrees of polymerization of three or four glucose residues in limit dextrin.. The protein operates within glycan degradation; glycogen degradation. Removes maltotriose and maltotetraose chains that are attached by 1,6-alpha-linkage to the limit dextrin main chain, generating a debranched limit dextrin. This chain is Glycogen debranching enzyme, found in Shigella boydii serotype 18 (strain CDC 3083-94 / BS512).